The chain runs to 154 residues: uncharacterized protein (154 aa).

Residues 23–43 (SAVALVTFAGAALSGVIPAIA) form a helical membrane-spanning segment.

It localises to the membrane. This is an uncharacterized protein from Mycobacterium tuberculosis (strain CDC 1551 / Oshkosh).